Reading from the N-terminus, the 227-residue chain is ATP-dependent dethiobiotin synthetase BioD (227 aa).

An ATP-binding site is contributed by aspartate 13–valine 18. Threonine 17 is a binding site for Mg(2+). Lysine 38 is an active-site residue. ATP contacts are provided by residues aspartate 55, glutamate 116–glycine 119, asparagine 176–arginine 177, and proline 205–isoleucine 207. Mg(2+)-binding residues include aspartate 55 and glutamate 116.

The protein belongs to the dethiobiotin synthetase family. Homodimer. Mg(2+) is required as a cofactor.

The protein resides in the cytoplasm. It catalyses the reaction (7R,8S)-7,8-diammoniononanoate + CO2 + ATP = (4R,5S)-dethiobiotin + ADP + phosphate + 3 H(+). It functions in the pathway cofactor biosynthesis; biotin biosynthesis; biotin from 7,8-diaminononanoate: step 1/2. In terms of biological role, catalyzes a mechanistically unusual reaction, the ATP-dependent insertion of CO2 between the N7 and N8 nitrogen atoms of 7,8-diaminopelargonic acid (DAPA, also called 7,8-diammoniononanoate) to form a ureido ring. This Vibrio vulnificus (strain CMCP6) protein is ATP-dependent dethiobiotin synthetase BioD.